Reading from the N-terminus, the 124-residue chain is Small ribosomal subunit protein uS12cz/uS12cy (124 aa).

It belongs to the universal ribosomal protein uS12 family. In terms of assembly, part of the 30S ribosomal subunit.

The protein resides in the plastid. In terms of biological role, with S4 and S5 plays an important role in translational accuracy. Located at the interface of the 30S and 50S subunits. The polypeptide is Small ribosomal subunit protein uS12cz/uS12cy (rps12-A) (Epifagus virginiana (Beechdrops)).